Here is a 201-residue protein sequence, read N- to C-terminus: Holliday junction branch migration complex subunit RuvA (201 aa).

The tract at residues 1–64 is domain I; sequence MIGFIRGLLV…EDAHSLFGFG (64 aa). A domain II region spans residues 65 to 143; that stretch reads TEAERGLFRS…IGVPSLAPAS (79 aa). The tract at residues 144–153 is flexible linker; it reads FAGGAAPLPA. Residues 153–201 form a domain III region; the sequence is AADPADEAVSALIALGFKPQEANTLVARQAAEGRSAEDLIRAALQSAVR.

The protein belongs to the RuvA family. As to quaternary structure, homotetramer. Forms an RuvA(8)-RuvB(12)-Holliday junction (HJ) complex. HJ DNA is sandwiched between 2 RuvA tetramers; dsDNA enters through RuvA and exits via RuvB. An RuvB hexamer assembles on each DNA strand where it exits the tetramer. Each RuvB hexamer is contacted by two RuvA subunits (via domain III) on 2 adjacent RuvB subunits; this complex drives branch migration. In the full resolvosome a probable DNA-RuvA(4)-RuvB(12)-RuvC(2) complex forms which resolves the HJ.

The protein localises to the cytoplasm. The RuvA-RuvB-RuvC complex processes Holliday junction (HJ) DNA during genetic recombination and DNA repair, while the RuvA-RuvB complex plays an important role in the rescue of blocked DNA replication forks via replication fork reversal (RFR). RuvA specifically binds to HJ cruciform DNA, conferring on it an open structure. The RuvB hexamer acts as an ATP-dependent pump, pulling dsDNA into and through the RuvAB complex. HJ branch migration allows RuvC to scan DNA until it finds its consensus sequence, where it cleaves and resolves the cruciform DNA. The polypeptide is Holliday junction branch migration complex subunit RuvA (Methylococcus capsulatus (strain ATCC 33009 / NCIMB 11132 / Bath)).